The chain runs to 249 residues: Leucyl/phenylalanyl-tRNA--protein transferase (249 aa).

Residues 1–21 (MSRTLPHLLSSDPASPFPPAE) form a disordered region.

This sequence belongs to the L/F-transferase family.

Its subcellular location is the cytoplasm. The catalysed reaction is N-terminal L-lysyl-[protein] + L-leucyl-tRNA(Leu) = N-terminal L-leucyl-L-lysyl-[protein] + tRNA(Leu) + H(+). It carries out the reaction N-terminal L-arginyl-[protein] + L-leucyl-tRNA(Leu) = N-terminal L-leucyl-L-arginyl-[protein] + tRNA(Leu) + H(+). The enzyme catalyses L-phenylalanyl-tRNA(Phe) + an N-terminal L-alpha-aminoacyl-[protein] = an N-terminal L-phenylalanyl-L-alpha-aminoacyl-[protein] + tRNA(Phe). Functionally, functions in the N-end rule pathway of protein degradation where it conjugates Leu, Phe and, less efficiently, Met from aminoacyl-tRNAs to the N-termini of proteins containing an N-terminal arginine or lysine. The polypeptide is Leucyl/phenylalanyl-tRNA--protein transferase (Xanthomonas campestris pv. campestris (strain 8004)).